The sequence spans 497 residues: Galactose/methyl galactoside import ATP-binding protein MglA (497 aa).

ABC transporter domains are found at residues 6 to 241 (LEIK…VGRS) and 252 to 497 (VPGE…AKYL). 38 to 45 (GENGAGKS) lines the ATP pocket.

The protein belongs to the ABC transporter superfamily. Galactose/methyl galactoside importer (TC 3.A.1.2.3) family. As to quaternary structure, the complex is composed of one ATP-binding protein (MglA), two transmembrane proteins (MglC) and a solute-binding protein (MglB).

It is found in the cell inner membrane. The catalysed reaction is D-galactose(out) + ATP + H2O = D-galactose(in) + ADP + phosphate + H(+). It catalyses the reaction methyl beta-D-galactoside(out) + ATP + H2O = methyl beta-D-galactoside(in) + ADP + phosphate + H(+). Its function is as follows. Part of the ABC transporter complex MglABC involved in galactose/methyl galactoside import. Responsible for energy coupling to the transport system. This Treponema denticola (strain ATCC 35405 / DSM 14222 / CIP 103919 / JCM 8153 / KCTC 15104) protein is Galactose/methyl galactoside import ATP-binding protein MglA.